Reading from the N-terminus, the 349-residue chain is Aspartate-semialdehyde dehydrogenase (349 aa).

NADP(+)-binding positions include 12–15 (TGSV) and 39–40 (NS). R113 contacts phosphate. C148 serves as the catalytic Acyl-thioester intermediate. Q175 contributes to the substrate binding site. 178–179 (SG) lines the NADP(+) pocket. E201 serves as a coordination point for substrate. K204 serves as a coordination point for phosphate. Residue R234 coordinates substrate. The Proton acceptor role is filled by H241. 326 to 327 (NT) is an NADP(+) binding site.

The protein belongs to the aspartate-semialdehyde dehydrogenase family. Homodimer.

The catalysed reaction is L-aspartate 4-semialdehyde + phosphate + NADP(+) = 4-phospho-L-aspartate + NADPH + H(+). It participates in amino-acid biosynthesis; L-lysine biosynthesis via DAP pathway; (S)-tetrahydrodipicolinate from L-aspartate: step 2/4. Its pathway is amino-acid biosynthesis; L-methionine biosynthesis via de novo pathway; L-homoserine from L-aspartate: step 2/3. It functions in the pathway amino-acid biosynthesis; L-threonine biosynthesis; L-threonine from L-aspartate: step 2/5. Its function is as follows. Catalyzes the NADPH-dependent formation of L-aspartate-semialdehyde (L-ASA) by the reductive dephosphorylation of L-aspartyl-4-phosphate. This Leptospira interrogans serogroup Icterohaemorrhagiae serovar copenhageni (strain Fiocruz L1-130) protein is Aspartate-semialdehyde dehydrogenase.